Consider the following 354-residue polypeptide: Carbonic anhydrase 12 (354 aa).

The signal sequence occupies residues 1-24 (MPRRSLHAAAVLLLVILKEQPSSP). Residues 25 to 301 (APVNGSKWTY…VQVCTAAGLS (277 aa)) are Extracellular-facing. Residues N28 and N80 are each glycosylated (N-linked (GlcNAc...) asparagine). Residues 30–289 (SKWTYFGPDG…FDERLVYTSF (260 aa)) enclose the Alpha-carbonic anhydrase domain. A disulfide bond links C50 and C230. The active-site Proton donor/acceptor is the H94. The Zn(2+) site is built by H119, H121, and H145. The N-linked (GlcNAc...) asparagine glycan is linked to N162. Substrate is bound at residue 226 to 227 (TT). The chain crosses the membrane as a helical span at residues 302 to 322 (LGIILSLALAGILGICIVVVV). The Cytoplasmic segment spans residues 323–354 (SIWLFRRKSIKKGDNKGVIYKPATKMETEAHA).

This sequence belongs to the alpha-carbonic anhydrase family. In terms of assembly, homodimer. The cofactor is Zn(2+). In terms of tissue distribution, highly expressed in colon, kidney, prostate, intestine and activated lymphocytes. Expressed at much higher levels in the renal cell cancers than in surrounding normal kidney tissue. Moderately expressed in pancreas, ovary and testis. Expressed in sweat glands and bronchiolar epithelium.

Its subcellular location is the membrane. The protein resides in the cell membrane. The catalysed reaction is hydrogencarbonate + H(+) = CO2 + H2O. Inhibited by coumarins, saccharin, sulfonamide derivatives such as acetazolamide (AZA), benzenesulfonamide and derivatives (4-carboxyethylbenzene-sulfonamide, 4-carboxyethylbenzene-sulfonamide ethyl ester, 4-(acetyl-2-aminoethyl)benzene-sulfonamide, 4-aminoethylbenzene-sulfonamide) and Foscarnet (phosphonoformate trisodium salt). Reversible hydration of carbon dioxide. This Homo sapiens (Human) protein is Carbonic anhydrase 12.